The primary structure comprises 74 residues: uncharacterized protein (74 aa).

This is an uncharacterized protein from Saccharolobus islandicus (Sulfolobus islandicus).